Reading from the N-terminus, the 58-residue chain is UPF0434 protein Daro_3207 (58 aa).

Belongs to the UPF0434 family.

In Dechloromonas aromatica (strain RCB), this protein is UPF0434 protein Daro_3207.